Reading from the N-terminus, the 489-residue chain is UDP-N-acetylmuramoyl-L-alanyl-D-glutamate--2,6-diaminopimelate ligase (489 aa).

Ser32 is a binding site for UDP-N-acetyl-alpha-D-muramoyl-L-alanyl-D-glutamate. 113–119 lines the ATP pocket; that stretch reads GTNGKTT. UDP-N-acetyl-alpha-D-muramoyl-L-alanyl-D-glutamate contacts are provided by residues 154–155, Ser181, Gln187, and Arg189; that span reads TT. Lys221 is subject to N6-carboxylysine. Meso-2,6-diaminopimelate contacts are provided by residues Arg381, 405–408, Gly456, and Glu460; that span reads DNPR. Residues 405 to 408 carry the Meso-diaminopimelate recognition motif motif; the sequence is DNPR.

The protein belongs to the MurCDEF family. MurE subfamily. It depends on Mg(2+) as a cofactor. Carboxylation is probably crucial for Mg(2+) binding and, consequently, for the gamma-phosphate positioning of ATP.

The protein resides in the cytoplasm. The enzyme catalyses UDP-N-acetyl-alpha-D-muramoyl-L-alanyl-D-glutamate + meso-2,6-diaminopimelate + ATP = UDP-N-acetyl-alpha-D-muramoyl-L-alanyl-gamma-D-glutamyl-meso-2,6-diaminopimelate + ADP + phosphate + H(+). Its pathway is cell wall biogenesis; peptidoglycan biosynthesis. Its function is as follows. Catalyzes the addition of meso-diaminopimelic acid to the nucleotide precursor UDP-N-acetylmuramoyl-L-alanyl-D-glutamate (UMAG) in the biosynthesis of bacterial cell-wall peptidoglycan. The sequence is that of UDP-N-acetylmuramoyl-L-alanyl-D-glutamate--2,6-diaminopimelate ligase from Gloeobacter violaceus (strain ATCC 29082 / PCC 7421).